Consider the following 501-residue polypeptide: Dipeptide and tripeptide permease A (501 aa).

Over 1-21 the chain is Cytoplasmic; the sequence is MSTANKKPTESVSLNAFKQPK. Residues 22 to 44 form a helical membrane-spanning segment; that stretch reads AFYLIFSIELWERFGYYGLQGIM. Residues 45–59 are Periplasmic-facing; it reads AVYLVKQLGMSEADS. The chain crosses the membrane as a helical span at residues 60–80; sequence ITLFSSFSALVYGLVAIGGWL. Residues 81-89 are Cytoplasmic-facing; the sequence is GDKILGTKR. A helical transmembrane segment spans residues 90–110; that stretch reads VIMLGAVVLAIGYALVAWSGH. A topological domain (periplasmic) is located at residue D111. A helical transmembrane segment spans residues 112–132; it reads AGIVYMGMAAIAVGNGLFKAN. Over 133 to 153 the chain is Cytoplasmic; the sequence is PSSLLSTCYAKDDPRLDGAFT. Residues 154 to 174 form a helical membrane-spanning segment; the sequence is MYYMSVNIGSFFSMLATPWLA. Over 175–178 the chain is Periplasmic; it reads ARYG. The chain crosses the membrane as a helical span at residues 179–199; the sequence is WSTAFALSVVGMLITVVNFAF. At 200-219 the chain is on the cytoplasmic side; the sequence is CQRWVKSYGSKPDFEPINFR. The chain crosses the membrane as a helical span at residues 220–240; it reads NLLLTIVGIVVLIAVATWLLH. The Periplasmic segment spans residues 241–246; the sequence is NQDIAR. Residues 247–267 traverse the membrane as a helical segment; that stretch reads MVLGVIALGIVIIFGKEAFSM. At 268 to 274 the chain is on the cytoplasmic side; sequence HGAARRK. A helical transmembrane segment spans residues 275-295; it reads MIVAFILMLQAIIFFVLYSQM. At 296–320 the chain is on the periplasmic side; the sequence is PTSLNFFAIRNVEHSILGIAFEPEQ. Residues 321 to 341 form a helical membrane-spanning segment; it reads YQALNPFWIITGSPILAAIYN. Topologically, residues 342-352 are cytoplasmic; it reads RMGDTLPMPMK. Residues 353 to 373 form a helical membrane-spanning segment; that stretch reads FAIGMVLCSGAFLILPLGAKF. The Periplasmic portion of the chain corresponds to 374 to 383; it reads ANDAGIVSVN. Residues 384-404 traverse the membrane as a helical segment; it reads WLIASYGLQSIGELMISGLGL. The Cytoplasmic portion of the chain corresponds to 405–414; that stretch reads AMVAQLVPQR. A helical transmembrane segment spans residues 415 to 435; it reads LMGFIMGSWFLTTAGANIIGG. At 436-459 the chain is on the periplasmic side; that stretch reads YVANLMAVPSDVTDPLMSLEVYGR. The helical transmembrane segment at 460-480 threads the bilayer; the sequence is VFMQIGIATAVIAVLMLLTAP. Over 481–501 the chain is Cytoplasmic; the sequence is KLNRMTQDDDTAEKGSKAATV.

This sequence belongs to the major facilitator superfamily. Proton-dependent oligopeptide transporter (POT/PTR) (TC 2.A.17) family. DtpA subfamily.

It localises to the cell inner membrane. In terms of biological role, proton-dependent permease that transports di- and tripeptides. The polypeptide is Dipeptide and tripeptide permease A (Salmonella typhi).